The primary structure comprises 314 residues: 3'-5' exoribonuclease YhaM (314 aa).

An HD domain is found at 163–279; the sequence is HVVSMLDLAK…LHYIDNLDAK (117 aa).

This sequence belongs to the YhaM family.

Its function is as follows. Shows a 3'-5' exoribonuclease activity. The sequence is that of 3'-5' exoribonuclease YhaM from Bacillus thuringiensis (strain Al Hakam).